A 352-amino-acid polypeptide reads, in one-letter code: Holliday junction branch migration complex subunit RuvB (352 aa).

Positions 4–185 (ADRLIAATGP…FGIVQRLEFY (182 aa)) are large ATPase domain (RuvB-L). Residues isoleucine 24, arginine 25, glycine 66, lysine 69, threonine 70, threonine 71, 132 to 134 (EDF), arginine 175, tyrosine 185, and arginine 222 each bind ATP. Mg(2+) is bound at residue threonine 70. The segment at 186–256 (STADLATIVS…VADLALNLLD (71 aa)) is small ATPAse domain (RuvB-S). Residues 259-352 (EHGFDHQDRR…VDEFLDAVDD (94 aa)) are head domain (RuvB-H). DNA-binding residues include arginine 295, arginine 314, and arginine 319.

This sequence belongs to the RuvB family. Homohexamer. Forms an RuvA(8)-RuvB(12)-Holliday junction (HJ) complex. HJ DNA is sandwiched between 2 RuvA tetramers; dsDNA enters through RuvA and exits via RuvB. An RuvB hexamer assembles on each DNA strand where it exits the tetramer. Each RuvB hexamer is contacted by two RuvA subunits (via domain III) on 2 adjacent RuvB subunits; this complex drives branch migration. In the full resolvosome a probable DNA-RuvA(4)-RuvB(12)-RuvC(2) complex forms which resolves the HJ.

It localises to the cytoplasm. It carries out the reaction ATP + H2O = ADP + phosphate + H(+). The RuvA-RuvB-RuvC complex processes Holliday junction (HJ) DNA during genetic recombination and DNA repair, while the RuvA-RuvB complex plays an important role in the rescue of blocked DNA replication forks via replication fork reversal (RFR). RuvA specifically binds to HJ cruciform DNA, conferring on it an open structure. The RuvB hexamer acts as an ATP-dependent pump, pulling dsDNA into and through the RuvAB complex. RuvB forms 2 homohexamers on either side of HJ DNA bound by 1 or 2 RuvA tetramers; 4 subunits per hexamer contact DNA at a time. Coordinated motions by a converter formed by DNA-disengaged RuvB subunits stimulates ATP hydrolysis and nucleotide exchange. Immobilization of the converter enables RuvB to convert the ATP-contained energy into a lever motion, pulling 2 nucleotides of DNA out of the RuvA tetramer per ATP hydrolyzed, thus driving DNA branch migration. The RuvB motors rotate together with the DNA substrate, which together with the progressing nucleotide cycle form the mechanistic basis for DNA recombination by continuous HJ branch migration. Branch migration allows RuvC to scan DNA until it finds its consensus sequence, where it cleaves and resolves cruciform DNA. The polypeptide is Holliday junction branch migration complex subunit RuvB (Pseudomonas fluorescens (strain SBW25)).